The sequence spans 284 residues: Bifunctional protein FolD (284 aa).

Residues 166–168 (GAS), serine 191, and isoleucine 232 contribute to the NADP(+) site.

Belongs to the tetrahydrofolate dehydrogenase/cyclohydrolase family. Homodimer.

The catalysed reaction is (6R)-5,10-methylene-5,6,7,8-tetrahydrofolate + NADP(+) = (6R)-5,10-methenyltetrahydrofolate + NADPH. It carries out the reaction (6R)-5,10-methenyltetrahydrofolate + H2O = (6R)-10-formyltetrahydrofolate + H(+). Its pathway is one-carbon metabolism; tetrahydrofolate interconversion. Its function is as follows. Catalyzes the oxidation of 5,10-methylenetetrahydrofolate to 5,10-methenyltetrahydrofolate and then the hydrolysis of 5,10-methenyltetrahydrofolate to 10-formyltetrahydrofolate. This is Bifunctional protein FolD from Neisseria gonorrhoeae (strain ATCC 700825 / FA 1090).